We begin with the raw amino-acid sequence, 355 residues long: Arginine kinase (355 aa).

Residues 6 to 90 form the Phosphagen kinase N-terminal domain; sequence TLEKLEAGFS…FDPIIEDYHN (85 aa). Residue 63-67 participates in substrate binding; it reads GVGIY. The Phosphagen kinase C-terminal domain occupies 118–355; it reads FVVSTRVRCG…AELIKIEKSL (238 aa). ATP is bound by residues 121-125 and histidine 184; that span reads STRVR. Glutamate 224 is a substrate binding site. Arginine 228 is an ATP binding site. Cysteine 270 contributes to the substrate binding site. Residues 279-283 and 308-313 each bind ATP; these read RASVH and RGTRGE. Substrate is bound at residue glutamate 313.

This sequence belongs to the ATP:guanido phosphotransferase family.

It catalyses the reaction L-arginine + ATP = N(omega)-phospho-L-arginine + ADP + H(+). The protein is Arginine kinase (ARGK) of Plodia interpunctella (Indianmeal moth).